We begin with the raw amino-acid sequence, 155 residues long: Small ribosomal subunit protein uS7 (155 aa).

Belongs to the universal ribosomal protein uS7 family. In terms of assembly, part of the 30S ribosomal subunit. Contacts proteins S9 and S11.

Its function is as follows. One of the primary rRNA binding proteins, it binds directly to 16S rRNA where it nucleates assembly of the head domain of the 30S subunit. Is located at the subunit interface close to the decoding center, probably blocks exit of the E-site tRNA. The sequence is that of Small ribosomal subunit protein uS7 from Mesoplasma florum (strain ATCC 33453 / NBRC 100688 / NCTC 11704 / L1) (Acholeplasma florum).